The chain runs to 413 residues: Multifunctional CCA protein (413 aa).

Positions 8 and 11 each coordinate ATP. Residues Gly-8 and Arg-11 each coordinate CTP. Mg(2+)-binding residues include Asp-21 and Asp-23. Arg-91, Arg-137, and Arg-140 together coordinate ATP. Positions 91, 137, and 140 each coordinate CTP. In terms of domain architecture, HD spans 228 to 329; that stretch reads TGVHTLMTLS…VKLFDAIDAW (102 aa).

This sequence belongs to the tRNA nucleotidyltransferase/poly(A) polymerase family. Bacterial CCA-adding enzyme type 1 subfamily. Monomer. Can also form homodimers and oligomers. The cofactor is Mg(2+). It depends on Ni(2+) as a cofactor.

It catalyses the reaction a tRNA precursor + 2 CTP + ATP = a tRNA with a 3' CCA end + 3 diphosphate. The enzyme catalyses a tRNA with a 3' CCA end + 2 CTP + ATP = a tRNA with a 3' CCACCA end + 3 diphosphate. Functionally, catalyzes the addition and repair of the essential 3'-terminal CCA sequence in tRNAs without using a nucleic acid template. Adds these three nucleotides in the order of C, C, and A to the tRNA nucleotide-73, using CTP and ATP as substrates and producing inorganic pyrophosphate. tRNA 3'-terminal CCA addition is required both for tRNA processing and repair. Also involved in tRNA surveillance by mediating tandem CCA addition to generate a CCACCA at the 3' terminus of unstable tRNAs. While stable tRNAs receive only 3'-terminal CCA, unstable tRNAs are marked with CCACCA and rapidly degraded. In Salmonella paratyphi A (strain ATCC 9150 / SARB42), this protein is Multifunctional CCA protein.